Reading from the N-terminus, the 494-residue chain is Aspartyl/glutamyl-tRNA(Asn/Gln) amidotransferase subunit B (494 aa).

The interval 475–494 is disordered; the sequence is TSGRADPKATNQMLAKKLKG.

The protein belongs to the GatB/GatE family. GatB subfamily. Heterotrimer of A, B and C subunits.

It catalyses the reaction L-glutamyl-tRNA(Gln) + L-glutamine + ATP + H2O = L-glutaminyl-tRNA(Gln) + L-glutamate + ADP + phosphate + H(+). The catalysed reaction is L-aspartyl-tRNA(Asn) + L-glutamine + ATP + H2O = L-asparaginyl-tRNA(Asn) + L-glutamate + ADP + phosphate + 2 H(+). In terms of biological role, allows the formation of correctly charged Asn-tRNA(Asn) or Gln-tRNA(Gln) through the transamidation of misacylated Asp-tRNA(Asn) or Glu-tRNA(Gln) in organisms which lack either or both of asparaginyl-tRNA or glutaminyl-tRNA synthetases. The reaction takes place in the presence of glutamine and ATP through an activated phospho-Asp-tRNA(Asn) or phospho-Glu-tRNA(Gln). This chain is Aspartyl/glutamyl-tRNA(Asn/Gln) amidotransferase subunit B, found in Acaryochloris marina (strain MBIC 11017).